A 433-amino-acid polypeptide reads, in one-letter code: Serine hydroxymethyltransferase (433 aa).

(6S)-5,6,7,8-tetrahydrofolate-binding positions include Leu-132 and 136–138 (GHL). Lys-241 bears the N6-(pyridoxal phosphate)lysine mark.

It belongs to the SHMT family. As to quaternary structure, homodimer. Pyridoxal 5'-phosphate serves as cofactor.

It localises to the cytoplasm. The enzyme catalyses (6R)-5,10-methylene-5,6,7,8-tetrahydrofolate + glycine + H2O = (6S)-5,6,7,8-tetrahydrofolate + L-serine. It participates in one-carbon metabolism; tetrahydrofolate interconversion. It functions in the pathway amino-acid biosynthesis; glycine biosynthesis; glycine from L-serine: step 1/1. In terms of biological role, catalyzes the reversible interconversion of serine and glycine with tetrahydrofolate (THF) serving as the one-carbon carrier. This reaction serves as the major source of one-carbon groups required for the biosynthesis of purines, thymidylate, methionine, and other important biomolecules. Also exhibits THF-independent aldolase activity toward beta-hydroxyamino acids, producing glycine and aldehydes, via a retro-aldol mechanism. In Rhodopseudomonas palustris (strain HaA2), this protein is Serine hydroxymethyltransferase.